A 260-amino-acid polypeptide reads, in one-letter code: Ribose-5-phosphate isomerase A (260 aa).

Substrate-binding positions include 33–36 (TGST), 89–92 (DGAD), and 102–105 (KGGG). Catalysis depends on glutamate 111, which acts as the Proton acceptor. Residue lysine 129 participates in substrate binding.

It belongs to the ribose 5-phosphate isomerase family. Homodimer.

It carries out the reaction aldehydo-D-ribose 5-phosphate = D-ribulose 5-phosphate. Its pathway is carbohydrate degradation; pentose phosphate pathway; D-ribose 5-phosphate from D-ribulose 5-phosphate (non-oxidative stage): step 1/1. Catalyzes the reversible conversion of ribose-5-phosphate to ribulose 5-phosphate. This is Ribose-5-phosphate isomerase A from Dinoroseobacter shibae (strain DSM 16493 / NCIMB 14021 / DFL 12).